Consider the following 319-residue polypeptide: FAD-dependent oxidoreductase FVFD30 (319 aa).

FAD is bound by residues arginine 6, aspartate 18, and lysine 25. Positions 129 and 188 each coordinate NAD(+). Residues lysine 129 and glycine 188 each coordinate NADP(+). Residues aspartate 228 and tyrosine 265 each coordinate FAD. Residue aspartate 228 coordinates 6-hydroxy-FAD. NAD(+) is bound at residue tyrosine 265. An NADP(+)-binding site is contributed by tyrosine 265. A helical membrane pass occupies residues 281 to 301; it reads GVGYFGVWWGIVIGGWLASLL.

This sequence belongs to the FAD-dependent oxidoreductase family.

Its subcellular location is the membrane. Functionally, probable FAD-dependent oxidoreductase that plays a role in the regulation of fruiting body development. This chain is FAD-dependent oxidoreductase FVFD30, found in Flammulina velutipes (Agaricus velutipes).